Here is a 182-residue protein sequence, read N- to C-terminus: Ribulose bisphosphate carboxylase small subunit, chloroplastic (182 aa).

The transit peptide at 1 to 58 (MASSMISSATVATVSRATPAQATMVAPFTGLKSTAAFPATRKSNNDITSLASNGGRVQ) directs the protein to the chloroplast.

The protein belongs to the RuBisCO small chain family. Heterohexadecamer of 8 large and 8 small subunits.

It localises to the plastid. The protein localises to the chloroplast. In terms of biological role, ruBisCO catalyzes two reactions: the carboxylation of D-ribulose 1,5-bisphosphate, the primary event in carbon dioxide fixation, as well as the oxidative fragmentation of the pentose substrate. Both reactions occur simultaneously and in competition at the same active site. Although the small subunit is not catalytic it is essential for maximal activity. The protein is Ribulose bisphosphate carboxylase small subunit, chloroplastic of Fagus crenata (Japanese beech).